The chain runs to 408 residues: MLQSIPGPQHILKALTGSLGLSTIFEPDHEASQNSFQCSKPELSCHAQYHGQDTCCFNYPGGQMLQTQFWDADPAVGPVDSWTIHGLWPDFCDGGFDQYCDSKRRYSNISLILVDSGRADLLEYMSDFWKDFRGDDEDLWEHEWNKHGTCISTLETTCYADYYPQQEVVDYFNKTVEIFQKLPTYQTLANAGIVPSHTETYTLDEIQAALAKAHAAPVTIRCRNRALNEVWYHFNIAGSLQTGTFVPSEPDGLKTNCPATGIHYIPKKHREPSRTTDTPSQPTTTGTPFKGRGNLIVSSMGGRRGCIISRGKWFASGTCATFKAKKATDDTFTLQSSKGICAFEGDAFSCGPHVTAPEEFSVQDGKLSYRGNTTFFADKAPKGRTQSTIFASQDEHLIDLAITWKERR.

An N-terminal signal peptide occupies residues 1-25 (MLQSIPGPQHILKALTGSLGLSTIF). 4 cysteine pairs are disulfide-bonded: Cys-38–Cys-56, Cys-45–Cys-92, Cys-55–Cys-158, and Cys-100–Cys-150. His-85 is an active-site residue. Asn-108 carries an N-linked (GlcNAc...) asparagine glycan. Residues Glu-143 and His-147 contribute to the active site. Asn-173 carries N-linked (GlcNAc...) asparagine glycosylation. Cysteines 222 and 257 form a disulfide. The tract at residues 268 to 292 (KHREPSRTTDTPSQPTTTGTPFKGR) is disordered. The span at 275–288 (TTDTPSQPTTTGTP) shows a compositional bias: low complexity. N-linked (GlcNAc...) asparagine glycosylation occurs at Asn-372.

This sequence belongs to the RNase T2 family.

It localises to the vacuole lumen. Its subcellular location is the cytoplasm. It catalyses the reaction a ribonucleotidyl-ribonucleotide-RNA + H2O = a 3'-end 3'-phospho-ribonucleotide-RNA + a 5'-end dephospho-ribonucleoside-RNA + H(+). In terms of biological role, rnase which modulates cell survival under stress conditions. Released from the vacuole to the cytoplasm during stress to promote tRNA and rRNA cleavage and to activate separately a downstream pathway that promotes cell death. Involved in cell size, vacuolar morphology and growth at high temperatures and high salt concentration. This is Ribonuclease T2-like (rny1) from Aspergillus fumigatus (strain ATCC MYA-4609 / CBS 101355 / FGSC A1100 / Af293) (Neosartorya fumigata).